The primary structure comprises 253 residues: 5'/3'-nucleotidase SurE (253 aa).

A divalent metal cation contacts are provided by Asp-8, Asp-9, Ser-39, and Asn-92.

The protein belongs to the SurE nucleotidase family. It depends on a divalent metal cation as a cofactor.

It localises to the cytoplasm. The catalysed reaction is a ribonucleoside 5'-phosphate + H2O = a ribonucleoside + phosphate. It catalyses the reaction a ribonucleoside 3'-phosphate + H2O = a ribonucleoside + phosphate. It carries out the reaction [phosphate](n) + H2O = [phosphate](n-1) + phosphate + H(+). Functionally, nucleotidase with a broad substrate specificity as it can dephosphorylate various ribo- and deoxyribonucleoside 5'-monophosphates and ribonucleoside 3'-monophosphates with highest affinity to 3'-AMP. Also hydrolyzes polyphosphate (exopolyphosphatase activity) with the preference for short-chain-length substrates (P20-25). Might be involved in the regulation of dNTP and NTP pools, and in the turnover of 3'-mononucleotides produced by numerous intracellular RNases (T1, T2, and F) during the degradation of various RNAs. This chain is 5'/3'-nucleotidase SurE, found in Escherichia fergusonii (strain ATCC 35469 / DSM 13698 / CCUG 18766 / IAM 14443 / JCM 21226 / LMG 7866 / NBRC 102419 / NCTC 12128 / CDC 0568-73).